The following is a 297-amino-acid chain: Putative S-adenosyl-L-methionine-dependent methyltransferase Mjls_1072 (297 aa).

S-adenosyl-L-methionine is bound by residues D124 and 153-154 (DL).

The protein belongs to the UPF0677 family.

Its function is as follows. Exhibits S-adenosyl-L-methionine-dependent methyltransferase activity. The chain is Putative S-adenosyl-L-methionine-dependent methyltransferase Mjls_1072 from Mycobacterium sp. (strain JLS).